Here is a 58-residue protein sequence, read N- to C-terminus: Putative calcium channel toxin 196 (58 aa).

An N-terminal signal peptide occupies residues glycine 1–alanine 16. A propeptide spanning residues glutamate 17 to glutamine 26 is cleaved from the precursor. Cystine bridges form between cysteine 25–cysteine 38, cysteine 31–cysteine 43, and cysteine 37–cysteine 52.

The protein belongs to the scorpion calcin-like family. KTX subfamily. In terms of tissue distribution, expressed by the venom gland.

The protein localises to the secreted. Its function is as follows. May inhibit voltage-gated potassium channels Kv1.1/KCNA1, hKv1.2/KCNA2, and Kv1.3/KCNA3. May also increase intracellular calcium release through the activation of nuclear inositol 1,4,5-trisphosphate receptors (ITPR) of cardiomyocytes, thereby causing an increase in the contraction frequency of these cells. The chain is Putative calcium channel toxin 196 from Lychas mucronatus (Chinese swimming scorpion).